The sequence spans 139 residues: Probable disulfide formation protein C 1 (139 aa).

A helical transmembrane segment spans residues 8-27 (EYALFTAWGASFIATLGSLY). A disulfide bridge links Cys37 with Cys40. 2 helical membrane-spanning segments follow: residues 42-61 (YQRI…VVKK) and 68-85 (YSLP…YHYV). The cysteines at positions 99 and 104 are disulfide-linked. A helical membrane pass occupies residues 113-135 (GFVTIPFLALIGFITIAVCSFIV).

The protein belongs to the DsbB family. BdbC subfamily.

Its subcellular location is the cell membrane. In terms of biological role, required for disulfide bond formation in some proteins. This chain is Probable disulfide formation protein C 1 (bdbC1), found in Bacillus anthracis.